The following is a 413-amino-acid chain: Probable tRNA pseudouridine synthase D (413 aa).

D97 acts as the Nucleophile in catalysis. Residues 167–370 (AAPNYYGYQR…YGTYRRVRLE (204 aa)) form the TRUD domain.

Belongs to the pseudouridine synthase TruD family.

It catalyses the reaction uridine(13) in tRNA = pseudouridine(13) in tRNA. Its function is as follows. Could be responsible for synthesis of pseudouridine from uracil-13 in transfer RNAs. The polypeptide is Probable tRNA pseudouridine synthase D (Pyrobaculum aerophilum (strain ATCC 51768 / DSM 7523 / JCM 9630 / CIP 104966 / NBRC 100827 / IM2)).